Here is a 202-residue protein sequence, read N- to C-terminus: Small ribosomal subunit protein uS5 (202 aa).

Residues 1–13 (MPGQQRRGGGSGG) are compositionally biased toward gly residues. Residues 1–31 (MPGQQRRGGGSGGSDRRERRDRSGGGPAQEK) are disordered. Residues 14–23 (SDRRERRDRS) show a composition bias toward basic and acidic residues. The 64-residue stretch at 34-97 (YVERVVAINR…EEAKKHFFKV (64 aa)) folds into the S5 DRBM domain.

The protein belongs to the universal ribosomal protein uS5 family. Part of the 30S ribosomal subunit. Contacts proteins S4 and S8.

Functionally, with S4 and S12 plays an important role in translational accuracy. In terms of biological role, located at the back of the 30S subunit body where it stabilizes the conformation of the head with respect to the body. In Parafrankia sp. (strain EAN1pec), this protein is Small ribosomal subunit protein uS5.